Reading from the N-terminus, the 63-residue chain is Anionic peptide NDBP7 (63 aa).

Residues 1-20 (MISRFCLLFLLVFVVSKIQA) form the signal peptide.

It belongs to the non-disulfide-bridged peptide (NDBP) superfamily. Long chain multifunctional peptide (group 2) family. In terms of tissue distribution, expressed by the venom gland.

It localises to the secreted. The polypeptide is Anionic peptide NDBP7 (Lychas mucronatus (Chinese swimming scorpion)).